The primary structure comprises 220 residues: Inner kinetochore subunit fta3 (220 aa).

This sequence belongs to the CENP-H/MCM16 family. In terms of assembly, component of the inner kinetochore constitutive centromere-associated network (CCAN) (also known as central kinetochore Sim4 complex in fission yeast), which is composed of at least cnl2, cnp3, cnp20, fta1, fta2, fta3, fta4, fta6, fta7, mal2, mhf1, mhf2, mis6, mis15, mis17, sim4 and wip1.

It localises to the nucleus. It is found in the chromosome. The protein localises to the centromere. The protein resides in the kinetochore. In terms of biological role, component of the kinetochore, a multiprotein complex that assembles on centromeric DNA and attaches chromosomes to spindle microtubules, mediating chromosome segregation and sister chromatid segregation during meiosis and mitosis. Component of the inner kinetochore constitutive centromere-associated network (CCAN), which serves as a structural platform for outer kinetochore assembly. Fta2, fta3 and fta4 associate with the central core (cnt) and inner repeat (inr) region of the centromere. This Schizosaccharomyces pombe (strain 972 / ATCC 24843) (Fission yeast) protein is Inner kinetochore subunit fta3 (fta3).